A 418-amino-acid polypeptide reads, in one-letter code: Tyrosine--tRNA ligase (418 aa).

Residue Tyr34 coordinates L-tyrosine. A 'HIGH' region motif is present at residues 39 to 48 (PTADSLHLGH). L-tyrosine-binding residues include Tyr169 and Gln173. A 'KMSKS' region motif is present at residues 229-233 (KFGKS). Lys232 lines the ATP pocket. An S4 RNA-binding domain is found at 352 to 418 (NNIVELLVSS…GKKKYFVLTY (67 aa)).

It belongs to the class-I aminoacyl-tRNA synthetase family. TyrS type 1 subfamily. Homodimer.

It localises to the cytoplasm. The enzyme catalyses tRNA(Tyr) + L-tyrosine + ATP = L-tyrosyl-tRNA(Tyr) + AMP + diphosphate + H(+). Catalyzes the attachment of tyrosine to tRNA(Tyr) in a two-step reaction: tyrosine is first activated by ATP to form Tyr-AMP and then transferred to the acceptor end of tRNA(Tyr). The protein is Tyrosine--tRNA ligase of Streptococcus pneumoniae (strain Taiwan19F-14).